A 488-amino-acid chain; its full sequence is Coagulation factor X (488 aa).

An N-terminal signal peptide occupies residues 1–31 (MGRPLHLVLLSASLAGLLLLGESLFIRREQA). A propeptide spanning residues 32–40 (NNILARVTR) is cleaved from the precursor. In terms of domain architecture, Gla spans 41-85 (ANSFLEEMKKGHLERECMEETCSYEEAREVFEDSDKTNEFWNKYK). Residues E46, E47, E54, E56, E59, E60, E65, E66, E69, E72, and E79 each carry the 4-carboxyglutamate modification. The cysteines at positions 57 and 62 are disulfide-linked. In terms of domain architecture, EGF-like 1; calcium-binding spans 86-122 (DGDQCETSPCQNQGKCKDGLGEYTCTCLEGFEGKNCE). 11 cysteine pairs are disulfide-bonded: C90–C101, C95–C110, C112–C121, C129–C140, C136–C149, C151–C164, C172–C342, C241–C246, C261–C277, C390–C404, and C415–C443. (3R)-3-hydroxyaspartate is present on D103. The EGF-like 2 domain maps to 125–165 (TRKLCSLDNGDCDQFCHEEQNSVVCSCARGYTLADNGKACI). The segment at 183 to 203 (SVAQATSSSGEAPDSITWKPY) is O-glycosylated at one site. Positions 183-234 (SVAQATSSSGEAPDSITWKPYDAADLDPTENPFDLLDFNQTQPERGDNNLTR) are cleaved as a propeptide — activation peptide. 2 O-linked (GalNAc...) threonine glycosylation sites follow: T199 and T211. N-linked (GlcNAc...) asparagine glycans are attached at residues N221 and N231. Positions 235–467 (IVGGQECKDG…FLKWIDRSMK (233 aa)) constitute a Peptidase S1 domain. Catalysis depends on charge relay system residues H276 and D322. The active-site Charge relay system is S419. An O-glycosylated at one site region spans residues 476–485 (SHAPEVITSS).

The protein belongs to the peptidase S1 family. In terms of assembly, the two chains are formed from a single-chain precursor by the excision of two Arg residues and are held together by 1 or more disulfide bonds. Forms a heterodimer with SERPINA5. Interacts (inactive and activated) with ixolaris, an anticoagulant protein from Ixodes scapularis saliva. Interacts (activated) with iripin-8, a serine protease inhibitor from Ixodes ricinus saliva. Interacts (activated) with FXa-directed anticoagulant from Aedes albopictus saliva. Interacts (activated) with guianensin, an anticoagulant protein from Simulium guianense saliva. Interacts (activated) with simukunin, an anticoagulant protein from Simulium vittatum saliva. In terms of processing, the vitamin K-dependent, enzymatic carboxylation of some glutamate residues allows the modified protein to bind calcium. N- and O-glycosylated. O-glycosylated with core 1 or possibly core 8 glycans. Post-translationally, proteolytically cleaved and activated by cathepsin CTSG. The activation peptide is cleaved by factor IXa (in the intrinsic pathway), or by factor VIIa (in the extrinsic pathway). In terms of processing, the iron and 2-oxoglutarate dependent 3-hydroxylation of aspartate and asparagine is (R) stereospecific within EGF domains. Plasma; synthesized in the liver.

It localises to the secreted. The catalysed reaction is Selective cleavage of Arg-|-Thr and then Arg-|-Ile bonds in prothrombin to form thrombin.. Inhibited by SERPINA5 and SERPINA10. Factor Xa is a vitamin K-dependent glycoprotein that converts prothrombin to thrombin in the presence of factor Va, calcium and phospholipid during blood clotting. Factor Xa activates pro-inflammatory signaling pathways in a protease-activated receptor (PAR)-dependent manner. Up-regulates expression of protease-activated receptors (PARs) F2R, F2RL1 and F2RL2 in dermal microvascular endothelial cells. Triggers the production of pro-inflammatory cytokines, such as MCP-1/CCL2 and IL6, in cardiac fibroblasts and umbilical vein endothelial cells in PAR-1/F2R-dependent manner. Triggers the production of pro-inflammatory cytokines, such as MCP-1/CCL2, IL6, TNF-alpha/TNF, IL-1beta/IL1B, IL8/CXCL8 and IL18, in endothelial cells and atrial tissues. Induces expression of adhesion molecules, such as ICAM1, VCAM1 and SELE, in endothelial cells and atrial tissues. Increases expression of phosphorylated ERK1/2 in dermal microvascular endothelial cells and atrial tissues. Triggers activation of the transcription factor NF-kappa-B in dermal microvascular endothelial cells and atrial tissues. Activates pro-inflammatory and pro-fibrotic responses in dermal fibroblasts and enhances wound healing probably via PAR-2/F2RL1-dependent mechanism. Activates barrier protective signaling responses in endothelial cells in PAR-2/F2RL1-dependent manner; the activity depends on the cleavage of PAR-2/F2RL1 by factor Xa. Up-regulates expression of plasminogen activator inhibitor 1 (SERPINE1) in atrial tissues. This chain is Coagulation factor X (F10), found in Homo sapiens (Human).